The following is a 351-amino-acid chain: uncharacterized protein (351 aa).

The protein belongs to the glycosyltransferase group 1 family. Glycosyltransferase 4 subfamily.

This is an uncharacterized protein from Methanocaldococcus jannaschii (strain ATCC 43067 / DSM 2661 / JAL-1 / JCM 10045 / NBRC 100440) (Methanococcus jannaschii).